Consider the following 282-residue polypeptide: Ribosomal protein L11 methyltransferase (282 aa).

4 residues coordinate S-adenosyl-L-methionine: T133, G154, D175, and N216.

Belongs to the methyltransferase superfamily. PrmA family.

Its subcellular location is the cytoplasm. It carries out the reaction L-lysyl-[protein] + 3 S-adenosyl-L-methionine = N(6),N(6),N(6)-trimethyl-L-lysyl-[protein] + 3 S-adenosyl-L-homocysteine + 3 H(+). In terms of biological role, methylates ribosomal protein L11. The sequence is that of Ribosomal protein L11 methyltransferase from Campylobacter jejuni subsp. doylei (strain ATCC BAA-1458 / RM4099 / 269.97).